Here is a 282-residue protein sequence, read N- to C-terminus: Succinate dehydrogenase [ubiquinone] iron-sulfur subunit, mitochondrial (282 aa).

Residues 1-30 (MAAVVGVSLKRGFSATALGRVGLQFQACRE) constitute a mitochondrion transit peptide. N6-acetyllysine is present on residues Lys53 and Lys57. In terms of domain architecture, 2Fe-2S ferredoxin-type spans 56 to 135 (DKPRMQTYKV…VSKIYPLPHM (80 aa)). Residues Cys95, Cys100, Cys103, and Cys115 each contribute to the [2Fe-2S] cluster site. An interaction with SDHAF1 region spans residues 148–220 (FYAQYKSIEP…PAVLMQAYRW (73 aa)). The 31-residue stretch at 178–208 (DREKLDGLYECILCACCSTSCPSYWWNGDKY) folds into the 4Fe-4S ferredoxin-type domain. 3 residues coordinate [4Fe-4S] cluster: Cys188, Cys191, and Cys194. Cys198 serves as a coordination point for [3Fe-4S] cluster. Trp203 is an a ubiquinone binding site. Cys245 and Cys251 together coordinate [3Fe-4S] cluster. Position 255 (Cys255) interacts with [4Fe-4S] cluster.

Belongs to the succinate dehydrogenase/fumarate reductase iron-sulfur protein family. In terms of assembly, component of complex II composed of four subunits: the flavoprotein (FP) SDHA, iron-sulfur protein (IP) SDHB, and a cytochrome b560 composed of SDHC and SDHD. Interacts with SDHAF1; the interaction is required for iron-sulfur cluster incorporation into SDHB. [2Fe-2S] cluster is required as a cofactor. It depends on [3Fe-4S] cluster as a cofactor. The cofactor is [4Fe-4S] cluster.

It is found in the mitochondrion inner membrane. It catalyses the reaction a quinone + succinate = fumarate + a quinol. The enzyme catalyses (R)-malate + a quinone = enol-oxaloacetate + a quinol. It carries out the reaction (S)-malate + a quinone = enol-oxaloacetate + a quinol. The protein operates within carbohydrate metabolism; tricarboxylic acid cycle; fumarate from succinate (eukaryal route): step 1/1. With respect to regulation, enol-oxaloacetate inhibits the succinate dehydrogenase activity. Functionally, iron-sulfur protein (IP) subunit of the succinate dehydrogenase complex (mitochondrial respiratory chain complex II), responsible for transferring electrons from succinate to ubiquinone (coenzyme Q). SDH also oxidizes malate to the non-canonical enol form of oxaloacetate, enol-oxaloacetate. Enol-oxaloacetate, which is a potent inhibitor of the succinate dehydrogenase activity, is further isomerized into keto-oxaloacetate. The protein is Succinate dehydrogenase [ubiquinone] iron-sulfur subunit, mitochondrial (Sdhb) of Rattus norvegicus (Rat).